Consider the following 326-residue polypeptide: tRNA-modifying protein YgfZ (326 aa).

Positions 27 and 189 each coordinate folate.

The protein belongs to the tRNA-modifying YgfZ family.

It localises to the cytoplasm. Its function is as follows. Folate-binding protein involved in regulating the level of ATP-DnaA and in the modification of some tRNAs. It is probably a key factor in regulatory networks that act via tRNA modification, such as initiation of chromosomal replication. This Shigella boydii serotype 4 (strain Sb227) protein is tRNA-modifying protein YgfZ.